We begin with the raw amino-acid sequence, 126 residues long: Cystatin-like cysteine protease inhibitor EPIC1 (126 aa).

The first 21 residues, 1–21 (MTFLRPILALLAATALVTTSA), serve as a signal peptide directing secretion. Asn-46 is a glycosylation site (N-linked (GlcNAc...) asparagine). The Secondary area of contact motif lies at 69 to 73 (QVVSG).

It belongs to the cystatin family. In terms of assembly, interacts with the host papain-like cysteine protease RCR3. Interacts with the host papain-like cysteine protease C14.

Its subcellular location is the secreted. Its function is as follows. Secreted effector that interacts with and inhibits the pathogenesis-related papain-like cysteine proteases C14 and RCR3 of host plants. Inhibition of host proteases by a pathogen extracellular protease inhibitor forms a specific type of defense-counterdefense mechanism between plants and microbial pathogens. This is Cystatin-like cysteine protease inhibitor EPIC1 from Phytophthora infestans (Potato late blight agent).